A 115-amino-acid chain; its full sequence is Large ribosomal subunit protein bL20c (115 aa).

It belongs to the bacterial ribosomal protein bL20 family.

The protein localises to the plastid. It localises to the chloroplast. Binds directly to 23S ribosomal RNA and is necessary for the in vitro assembly process of the 50S ribosomal subunit. It is not involved in the protein synthesizing functions of that subunit. The sequence is that of Large ribosomal subunit protein bL20c from Cycas taitungensis (Prince sago).